The primary structure comprises 239 residues: Small ribosomal subunit protein uS3c (239 aa).

Residues 43–139 enclose the KH type-2 domain; sequence IKNYIQKNRK…RLNIGIEKVK (97 aa).

The protein belongs to the universal ribosomal protein uS3 family. In terms of assembly, part of the 30S ribosomal subunit.

It localises to the plastid. Its subcellular location is the chloroplast. The protein is Small ribosomal subunit protein uS3c (rps3) of Oryza nivara (Indian wild rice).